A 130-amino-acid chain; its full sequence is Small ribosomal subunit protein uS9 (130 aa).

The protein belongs to the universal ribosomal protein uS9 family.

The chain is Small ribosomal subunit protein uS9 from Bordetella pertussis (strain Tohama I / ATCC BAA-589 / NCTC 13251).